The chain runs to 354 residues: Uroporphyrinogen decarboxylase (354 aa).

Substrate-binding positions include arginine 27 to arginine 31, aspartate 77, tyrosine 154, threonine 209, and histidine 327.

Belongs to the uroporphyrinogen decarboxylase family. In terms of assembly, homodimer.

Its subcellular location is the cytoplasm. It carries out the reaction uroporphyrinogen III + 4 H(+) = coproporphyrinogen III + 4 CO2. It functions in the pathway porphyrin-containing compound metabolism; protoporphyrin-IX biosynthesis; coproporphyrinogen-III from 5-aminolevulinate: step 4/4. Catalyzes the decarboxylation of four acetate groups of uroporphyrinogen-III to yield coproporphyrinogen-III. The polypeptide is Uroporphyrinogen decarboxylase (Escherichia coli O7:K1 (strain IAI39 / ExPEC)).